A 446-amino-acid polypeptide reads, in one-letter code: Histidine--tRNA ligase (446 aa).

Residues 403–422 are disordered; the sequence is TASVKPLRGTGDDGEKSVQQ.

Belongs to the class-II aminoacyl-tRNA synthetase family. As to quaternary structure, homodimer.

The protein resides in the cytoplasm. The enzyme catalyses tRNA(His) + L-histidine + ATP = L-histidyl-tRNA(His) + AMP + diphosphate + H(+). The chain is Histidine--tRNA ligase from Burkholderia thailandensis (strain ATCC 700388 / DSM 13276 / CCUG 48851 / CIP 106301 / E264).